Here is a 66-residue protein sequence, read N- to C-terminus: Alpha-conotoxin-like Tx2 (66 aa).

The signal sequence occupies residues M1–S21. Residues F22–P49 constitute a propeptide that is removed on maturation. 2 disulfides stabilise this stretch: C51/C57 and C52/C65. The ser-Xaa-Pro motif, crucial for potent interaction with nAChR stretch occupies residues S53–P55.

The protein belongs to the conotoxin A superfamily. Expressed by the venom duct.

It is found in the secreted. Its function is as follows. Alpha-conotoxins act on postsynaptic membranes, they bind to the nicotinic acetylcholine receptors (nAChR) and thus inhibit them. This Conus textile (Cloth-of-gold cone) protein is Alpha-conotoxin-like Tx2.